We begin with the raw amino-acid sequence, 210 residues long: 2,3-bisphosphoglycerate-dependent phosphoglycerate mutase (210 aa).

Substrate-binding positions include 9 to 16 (RHGQSEWN), 22 to 23 (TG), R61, 88 to 91 (ERDY), K99, 115 to 116 (RR), and 159 to 160 (GN). H10 acts as the Tele-phosphohistidine intermediate in catalysis. Residue E88 is the Proton donor/acceptor of the active site.

This sequence belongs to the phosphoglycerate mutase family. BPG-dependent PGAM subfamily. As to quaternary structure, homodimer.

The catalysed reaction is (2R)-2-phosphoglycerate = (2R)-3-phosphoglycerate. It participates in carbohydrate degradation; glycolysis; pyruvate from D-glyceraldehyde 3-phosphate: step 3/5. Functionally, catalyzes the interconversion of 2-phosphoglycerate and 3-phosphoglycerate. This Parvibaculum lavamentivorans (strain DS-1 / DSM 13023 / NCIMB 13966) protein is 2,3-bisphosphoglycerate-dependent phosphoglycerate mutase.